The chain runs to 53 residues: Conotoxin Cal22e (53 aa).

The propeptide occupies 1 to 5 (GRPSA).

Post-translationally, contains 4 disulfide bonds. In terms of tissue distribution, expressed by the venom duct.

The protein localises to the secreted. Probable neurotoxin with unknown target. Possibly targets ion channels. The polypeptide is Conotoxin Cal22e (Californiconus californicus (California cone)).